Consider the following 178-residue polypeptide: Large ribosomal subunit protein uL6 (178 aa).

It belongs to the universal ribosomal protein uL6 family. As to quaternary structure, part of the 50S ribosomal subunit.

In terms of biological role, this protein binds to the 23S rRNA, and is important in its secondary structure. It is located near the subunit interface in the base of the L7/L12 stalk, and near the tRNA binding site of the peptidyltransferase center. The protein is Large ribosomal subunit protein uL6 of Limosilactobacillus fermentum (strain NBRC 3956 / LMG 18251) (Lactobacillus fermentum).